Reading from the N-terminus, the 615-residue chain is Putative binding protein BruAb2_0648 (615 aa).

Positions 1–29 (MLNRFIAFFRSVFLIGLVATAFGALPARA) are cleaved as a signal peptide.

It belongs to the bacterial solute-binding protein 5 family.

Its subcellular location is the periplasm. The polypeptide is Putative binding protein BruAb2_0648 (Brucella abortus biovar 1 (strain 9-941)).